The chain runs to 393 residues: NAD(P)H-quinone oxidoreductase subunit H, chloroplastic (393 aa).

Belongs to the complex I 49 kDa subunit family. NDH is composed of at least 16 different subunits, 5 of which are encoded in the nucleus.

The protein resides in the plastid. The protein localises to the chloroplast thylakoid membrane. It carries out the reaction a plastoquinone + NADH + (n+1) H(+)(in) = a plastoquinol + NAD(+) + n H(+)(out). The enzyme catalyses a plastoquinone + NADPH + (n+1) H(+)(in) = a plastoquinol + NADP(+) + n H(+)(out). NDH shuttles electrons from NAD(P)H:plastoquinone, via FMN and iron-sulfur (Fe-S) centers, to quinones in the photosynthetic chain and possibly in a chloroplast respiratory chain. The immediate electron acceptor for the enzyme in this species is believed to be plastoquinone. Couples the redox reaction to proton translocation, and thus conserves the redox energy in a proton gradient. The protein is NAD(P)H-quinone oxidoreductase subunit H, chloroplastic of Cucumis sativus (Cucumber).